The following is a 151-amino-acid chain: Peptide deformylase (151 aa).

2 residues coordinate Fe cation: Cys88 and His130. Glu131 is an active-site residue. His134 provides a ligand contact to Fe cation.

The protein belongs to the polypeptide deformylase family. Fe(2+) is required as a cofactor.

The enzyme catalyses N-terminal N-formyl-L-methionyl-[peptide] + H2O = N-terminal L-methionyl-[peptide] + formate. Its function is as follows. Removes the formyl group from the N-terminal Met of newly synthesized proteins. Requires at least a dipeptide for an efficient rate of reaction. N-terminal L-methionine is a prerequisite for activity but the enzyme has broad specificity at other positions. The sequence is that of Peptide deformylase from Heliobacterium modesticaldum (strain ATCC 51547 / Ice1).